We begin with the raw amino-acid sequence, 300 residues long: Estradiol 17-beta-dehydrogenase 11 (300 aa).

Positions 1 to 18 (MKILLDLLLLLPLLIVCC) are cleaved as a signal peptide. Residue 40–67 (LITGAGHGIGRLTAYEFAKLKSKLVLWD) coordinates NADP(+). Ser-172 serves as a coordination point for substrate. Tyr-185 serves as the catalytic Proton acceptor. Lys-189 is a binding site for NADP(+).

It belongs to the short-chain dehydrogenases/reductases (SDR) family. 17-beta-HSD 3 subfamily.

Its subcellular location is the endoplasmic reticulum. It is found in the lipid droplet. The enzyme catalyses 17beta-estradiol + NAD(+) = estrone + NADH + H(+). It catalyses the reaction 17beta-estradiol + NADP(+) = estrone + NADPH + H(+). Can convert androstan-3-alpha,17-beta-diol (3-alpha-diol) to androsterone in vitro, suggesting that it may participate in androgen metabolism during steroidogenesis. May act by metabolizing compounds that stimulate steroid synthesis and/or by generating metabolites that inhibit it. Has no activity toward DHEA (dehydroepiandrosterone), or A-dione (4-androste-3,17-dione), and only a slight activity toward testosterone to A-dione. In Macaca fascicularis (Crab-eating macaque), this protein is Estradiol 17-beta-dehydrogenase 11 (HSD17B11).